The following is a 189-amino-acid chain: Cell division protein SepF (189 aa).

Disordered regions lie at residues 1-75 and 155-174; these read MEGQ…GLPG and STPSSQGMPPLQRPLQSPTP.

This sequence belongs to the SepF family. In terms of assembly, homodimer. Interacts with FtsZ.

Its subcellular location is the cytoplasm. Functionally, cell division protein that is part of the divisome complex and is recruited early to the Z-ring. Probably stimulates Z-ring formation, perhaps through the cross-linking of FtsZ protofilaments. Its function overlaps with FtsA. The protein is Cell division protein SepF of Synechococcus sp. (strain JA-3-3Ab) (Cyanobacteria bacterium Yellowstone A-Prime).